A 339-amino-acid polypeptide reads, in one-letter code: Ketol-acid reductoisomerase (NADP(+)) (339 aa).

Residues 1–182 (MRVYYDRDAD…GGGRSGIIET (182 aa)) form the KARI N-terminal Rossmann domain. NADP(+)-binding positions include 24 to 27 (YGSQ), arginine 48, serine 51, threonine 53, and 83 to 86 (DEHQ). Histidine 108 is a catalytic residue. An NADP(+)-binding site is contributed by glycine 134. A KARI C-terminal knotted domain is found at 183-328 (NFREECETDL…ARLRGMMPWI (146 aa)). 4 residues coordinate Mg(2+): aspartate 191, glutamate 195, glutamate 227, and glutamate 231. Serine 252 serves as a coordination point for substrate.

The protein belongs to the ketol-acid reductoisomerase family. Mg(2+) serves as cofactor.

The catalysed reaction is (2R)-2,3-dihydroxy-3-methylbutanoate + NADP(+) = (2S)-2-acetolactate + NADPH + H(+). The enzyme catalyses (2R,3R)-2,3-dihydroxy-3-methylpentanoate + NADP(+) = (S)-2-ethyl-2-hydroxy-3-oxobutanoate + NADPH + H(+). It functions in the pathway amino-acid biosynthesis; L-isoleucine biosynthesis; L-isoleucine from 2-oxobutanoate: step 2/4. Its pathway is amino-acid biosynthesis; L-valine biosynthesis; L-valine from pyruvate: step 2/4. Its function is as follows. Involved in the biosynthesis of branched-chain amino acids (BCAA). Catalyzes an alkyl-migration followed by a ketol-acid reduction of (S)-2-acetolactate (S2AL) to yield (R)-2,3-dihydroxy-isovalerate. In the isomerase reaction, S2AL is rearranged via a Mg-dependent methyl migration to produce 3-hydroxy-3-methyl-2-ketobutyrate (HMKB). In the reductase reaction, this 2-ketoacid undergoes a metal-dependent reduction by NADPH to yield (R)-2,3-dihydroxy-isovalerate. This chain is Ketol-acid reductoisomerase (NADP(+)), found in Caulobacter sp. (strain K31).